A 125-amino-acid chain; its full sequence is MARLAGVDIPREKRLEIALTYIYGVGKTRAHETLAATGISADVRVKDLTDAELVQLRDYIEGNYKVEGDLRREVAADIRRKVEIGSYEGLRHRKGLPVRGQRTKTNARTRKGPKRTVAGKKKAGR.

The segment at 93-125 (RKGLPVRGQRTKTNARTRKGPKRTVAGKKKAGR) is disordered.

This sequence belongs to the universal ribosomal protein uS13 family. In terms of assembly, part of the 30S ribosomal subunit. Forms a loose heterodimer with protein S19. Forms two bridges to the 50S subunit in the 70S ribosome.

Located at the top of the head of the 30S subunit, it contacts several helices of the 16S rRNA. In the 70S ribosome it contacts the 23S rRNA (bridge B1a) and protein L5 of the 50S subunit (bridge B1b), connecting the 2 subunits; these bridges are implicated in subunit movement. Contacts the tRNAs in the A and P-sites. In Paenarthrobacter aurescens (strain TC1), this protein is Small ribosomal subunit protein uS13.